We begin with the raw amino-acid sequence, 115 residues long: Probable 4-amino-4-deoxy-L-arabinose-phosphoundecaprenol flippase subunit ArnE (115 aa).

3 consecutive transmembrane segments (helical) span residues 42 to 62 (PWPW…LLLL), 65 to 85 (VEVG…TLVA), and 93 to 112 (VDRR…ALLG). The EamA domain occupies 46 to 113 (LALLALGLGL…IVAGVALLGR (68 aa)).

It belongs to the ArnE family. As to quaternary structure, heterodimer of ArnE and ArnF.

The protein localises to the cell inner membrane. Its pathway is bacterial outer membrane biogenesis; lipopolysaccharide biosynthesis. Its function is as follows. Translocates 4-amino-4-deoxy-L-arabinose-phosphoundecaprenol (alpha-L-Ara4N-phosphoundecaprenol) from the cytoplasmic to the periplasmic side of the inner membrane. The protein is Probable 4-amino-4-deoxy-L-arabinose-phosphoundecaprenol flippase subunit ArnE of Pseudomonas paraeruginosa (strain DSM 24068 / PA7) (Pseudomonas aeruginosa (strain PA7)).